A 215-amino-acid polypeptide reads, in one-letter code: Cytochrome b6 (215 aa).

Residues I32–F52 traverse the membrane as a helical segment. C35 contributes to the heme c binding site. 2 residues coordinate heme b: H86 and H100. A run of 3 helical transmembrane segments spans residues A90 to F110, L116 to Y136, and L186 to I206. Residues H187 and H202 each contribute to the heme b site.

This sequence belongs to the cytochrome b family. PetB subfamily. As to quaternary structure, the 4 large subunits of the cytochrome b6-f complex are cytochrome b6, subunit IV (17 kDa polypeptide, PetD), cytochrome f and the Rieske protein, while the 4 small subunits are PetG, PetL, PetM and PetN. The complex functions as a dimer. Requires heme b as cofactor. Heme c is required as a cofactor.

Its subcellular location is the plastid. The protein localises to the chloroplast thylakoid membrane. Component of the cytochrome b6-f complex, which mediates electron transfer between photosystem II (PSII) and photosystem I (PSI), cyclic electron flow around PSI, and state transitions. In Euglena gracilis, this protein is Cytochrome b6.